The sequence spans 222 residues: uncharacterized protein (222 aa).

This sequence belongs to the PhoU family.

It localises to the cytoplasm. In terms of biological role, not known; probably involved in phosphate transport and/or metabolism. This is an uncharacterized protein from Deinococcus radiodurans (strain ATCC 13939 / DSM 20539 / JCM 16871 / CCUG 27074 / LMG 4051 / NBRC 15346 / NCIMB 9279 / VKM B-1422 / R1).